The chain runs to 1007 residues: Probable beta-galactosidase A (1007 aa).

The signal sequence occupies residues 1–18 (MRLLPVWTAALLAAQAAG). Substrate contacts are provided by Tyr96, Asn140, Ala141, and Glu142. The N-linked (GlcNAc...) asparagine glycan is linked to Asn156. Asn199 contacts substrate. Catalysis depends on Glu200, which acts as the Proton donor. An intrachain disulfide couples Cys205 to Cys206. A substrate-binding site is contributed by Tyr260. Residues Cys266 and Cys315 are joined by a disulfide bond. Residue Glu298 is the Nucleophile of the active site. Tyr364 is a substrate binding site. Asn405, Asn422, Asn621, Asn740, Asn775, and Asn914 each carry an N-linked (GlcNAc...) asparagine glycan.

The protein belongs to the glycosyl hydrolase 35 family.

Its subcellular location is the secreted. The catalysed reaction is Hydrolysis of terminal non-reducing beta-D-galactose residues in beta-D-galactosides.. In terms of biological role, cleaves beta-linked terminal galactosyl residues from gangliosides, glycoproteins, and glycosaminoglycans. This Emericella nidulans (strain FGSC A4 / ATCC 38163 / CBS 112.46 / NRRL 194 / M139) (Aspergillus nidulans) protein is Probable beta-galactosidase A (lacA).